A 238-amino-acid polypeptide reads, in one-letter code: Probable septum site-determining protein MinC (238 aa).

It belongs to the MinC family. As to quaternary structure, interacts with MinD and FtsZ.

Functionally, cell division inhibitor that blocks the formation of polar Z ring septums. Rapidly oscillates between the poles of the cell to destabilize FtsZ filaments that have formed before they mature into polar Z rings. Prevents FtsZ polymerization. This chain is Probable septum site-determining protein MinC, found in Blochmanniella floridana.